The following is a 136-amino-acid chain: MARTKQTARKSTGGKAPRKQLATKAARKSAPSTGGVKKPHRYRPGTVALREIRRYQKSTELLIRKLPFQRLVREIAQDFKTDLRFQSAAIGALQEAAEAYLVGLFEDTNLCAIHAKRVTIMPKDIQLARRIRGERA.

The tract at residues 1-43 (MARTKQTARKSTGGKAPRKQLATKAARKSAPSTGGVKKPHRYR) is disordered. An N6,N6,N6-trimethyllysine; alternate modification is found at Lys5. The residue at position 5 (Lys5) is an N6,N6-dimethyllysine; alternate. N6-methyllysine; alternate is present on residues Lys5 and Lys10. Lys10 is subject to N6-acetyllysine; alternate. At Ser11 the chain carries Phosphoserine. Position 15 is an N6,N6-dimethyllysine; alternate (Lys15). N6-acetyllysine; alternate is present on residues Lys15, Lys19, Lys24, Lys28, and Lys37. N6-methyllysine; alternate occurs at positions 19, 24, 28, and 37. An N6,N6,N6-trimethyllysine; alternate mark is found at Lys28 and Lys37. Residues Lys28 and Lys37 each carry the N6,N6-dimethyllysine; alternate modification. Lys57 and Lys65 each carry N6-acetyllysine. The residue at position 80 (Lys80) is an N6,N6,N6-trimethyllysine; alternate. Lys80 bears the N6,N6-dimethyllysine; alternate mark. At Lys80 the chain carries N6-methyllysine; alternate.

This sequence belongs to the histone H3 family. In terms of assembly, the nucleosome is a histone octamer containing two molecules each of H2A, H2B, H3 and H4 assembled in one H3-H4 heterotetramer and two H2A-H2B heterodimers. The octamer wraps approximately 147 bp of DNA. Phosphorylated at Ser-11. This is required for transcriptional activation through TBP recruitment to the promoters. Phosphorylation at Ser-11 also promotes subsequent acetylation at Lys-15. Post-translationally, mono-, di- and trimethylation of Lys-5 by the COMPASS complex activates gene expression by regulating transcription elongation and plays a role in telomere length maintenance. Lys-5 methylation enrichment correlates with transcription levels, and occurs in a 5' to 3' gradient with tri-methyl enrichment at the 5'-end of genes, shifting to di-methyl and then mono-methyl. The COMPASS mediated di and trimethylation of Lys-5 requires histone H2B monoubiquitination. Methylation of Lys-37 by SET2 represses gene expression. Methylation of Lys-80 by DOT1 is required for association of SIR proteins with telomeric regions and for telomeric silencing. In terms of processing, acetylation of histone H3 leads to transcriptional activation. Acetylation at Lys-15 is promoted by the phosphorylation at Ser-11. Acetylation at Lys-57 occurs predominantly in newly synthesized H3 molecule during G1, S and G2/M of the cell cycle and may be involved in DNA repair.

It localises to the nucleus. Its subcellular location is the chromosome. In terms of biological role, core component of nucleosome. Nucleosomes wrap and compact DNA into chromatin, limiting DNA accessibility to the cellular machineries which require DNA as a template. Histones thereby play a central role in transcription regulation, DNA repair, DNA replication and chromosomal stability. DNA accessibility is regulated via a complex set of post-translational modifications of histones, also called histone code, and nucleosome remodeling. In Trichinella pseudospiralis (Parasitic roundworm), this protein is Histone H3.3 (HHT3).